The sequence spans 159 residues: Ribosomal RNA large subunit methyltransferase H (159 aa).

Residues G108 and F127 to F132 each bind S-adenosyl-L-methionine.

The protein belongs to the RNA methyltransferase RlmH family. As to quaternary structure, homodimer.

It localises to the cytoplasm. It catalyses the reaction pseudouridine(1915) in 23S rRNA + S-adenosyl-L-methionine = N(3)-methylpseudouridine(1915) in 23S rRNA + S-adenosyl-L-homocysteine + H(+). Specifically methylates the pseudouridine at position 1915 (m3Psi1915) in 23S rRNA. This Clostridium acetobutylicum (strain ATCC 824 / DSM 792 / JCM 1419 / IAM 19013 / LMG 5710 / NBRC 13948 / NRRL B-527 / VKM B-1787 / 2291 / W) protein is Ribosomal RNA large subunit methyltransferase H.